The sequence spans 473 residues: ATP synthase subunit beta 2 (473 aa).

Residue 158 to 165 (GGAGVGKT) coordinates ATP.

The protein belongs to the ATPase alpha/beta chains family. As to quaternary structure, F-type ATPases have 2 components, CF(1) - the catalytic core - and CF(0) - the membrane proton channel. CF(1) has five subunits: alpha(3), beta(3), gamma(1), delta(1), epsilon(1). CF(0) has three main subunits: a(1), b(2) and c(9-12). The alpha and beta chains form an alternating ring which encloses part of the gamma chain. CF(1) is attached to CF(0) by a central stalk formed by the gamma and epsilon chains, while a peripheral stalk is formed by the delta and b chains.

Its subcellular location is the cell membrane. It catalyses the reaction ATP + H2O + 4 H(+)(in) = ADP + phosphate + 5 H(+)(out). In terms of biological role, produces ATP from ADP in the presence of a proton gradient across the membrane. The catalytic sites are hosted primarily by the beta subunits. The sequence is that of ATP synthase subunit beta 2 from Listeria welshimeri serovar 6b (strain ATCC 35897 / DSM 20650 / CCUG 15529 / CIP 8149 / NCTC 11857 / SLCC 5334 / V8).